Here is a 66-residue protein sequence, read N- to C-terminus: MPKMKTKSSAKKRFKVTSTGKVMAAQAGKQHGMIKRSNKFLRNARGTSELSAPDSKIVKSYMPYDR.

Belongs to the bacterial ribosomal protein bL35 family.

The chain is Large ribosomal subunit protein bL35 from Jannaschia sp. (strain CCS1).